A 119-amino-acid chain; its full sequence is Large ribosomal subunit protein bL20 (119 aa).

It belongs to the bacterial ribosomal protein bL20 family.

Binds directly to 23S ribosomal RNA and is necessary for the in vitro assembly process of the 50S ribosomal subunit. It is not involved in the protein synthesizing functions of that subunit. This is Large ribosomal subunit protein bL20 from Shewanella amazonensis (strain ATCC BAA-1098 / SB2B).